The chain runs to 398 residues: Cytohesin-1 (398 aa).

Methionine 1 is subject to N-acetylmethionine. Residues 10-67 (SDLTAEERQELENIRRRKQELLADIQRLKDEIAEVANEIENLGSTEERKNMQRNKQVA) adopt a coiled-coil conformation. The SEC7 domain maps to 73–202 (FNMDPKKGIQ…IIMLNTSLHN (130 aa)). The region spanning 260–377 (NPDREGWLLK…WIKCIKAAIS (118 aa)) is the PH domain. Residues 269 to 277 (KLGGGRVKT), arginine 281, tyrosine 292, arginine 302, and asparagine 351 contribute to the a 1,2-diacyl-sn-glycero-3-phospho-(1D-myo-inositol-3,4,5-trisphosphate) site. The interval 388 to 396 (RKKKVSSTK) is C-terminal autoinhibitory region.

Interacts with TRIM23 and CYTIP. Interacts (via coiled-coil domain) with FRMD4A (via coiled-coil domain). Interacts with FRMD4B. Found in a complex with PARD3, CYTH1 and FRMD4A. Interacts (via N-terminal domain) with INAVA (via N-terminal domain). In terms of processing, ubiquitinated by SCF(FBXW11) E3 ubiquitin-protein ligase complex. Ubiquitination induces proteasomal degradation.

The protein localises to the cell membrane. The protein resides in the cytoplasm. It localises to the cytosol. Its subcellular location is the cell junction. It is found in the tight junction. The protein localises to the adherens junction. Functionally, promotes guanine-nucleotide exchange on ARF1, ARF5 and ARF6. Promotes the activation of ARF factors through replacement of GDP with GTP. Plays an important role in membrane trafficking, during junctional remodeling and epithelial polarization, through regulation of ARF6 activity. In Chlorocebus aethiops (Green monkey), this protein is Cytohesin-1 (CYTH1).